The following is a 334-amino-acid chain: Ketol-acid reductoisomerase (NADP(+)) (334 aa).

The region spanning Met-1–Thr-181 is the KARI N-terminal Rossmann domain. Residues Tyr-24–Gln-27, Arg-47, Ser-50, Ser-52, and Asp-82–Gln-85 each bind NADP(+). His-107 is an active-site residue. NADP(+) is bound at residue Gly-133. One can recognise a KARI C-terminal knotted domain in the interval Ser-182–Ile-323. Mg(2+)-binding residues include Asp-190, Glu-194, Glu-226, and Glu-230. Position 251 (Ser-251) interacts with substrate.

The protein belongs to the ketol-acid reductoisomerase family. The cofactor is Mg(2+).

It catalyses the reaction (2R)-2,3-dihydroxy-3-methylbutanoate + NADP(+) = (2S)-2-acetolactate + NADPH + H(+). The enzyme catalyses (2R,3R)-2,3-dihydroxy-3-methylpentanoate + NADP(+) = (S)-2-ethyl-2-hydroxy-3-oxobutanoate + NADPH + H(+). The protein operates within amino-acid biosynthesis; L-isoleucine biosynthesis; L-isoleucine from 2-oxobutanoate: step 2/4. It participates in amino-acid biosynthesis; L-valine biosynthesis; L-valine from pyruvate: step 2/4. Involved in the biosynthesis of branched-chain amino acids (BCAA). Catalyzes an alkyl-migration followed by a ketol-acid reduction of (S)-2-acetolactate (S2AL) to yield (R)-2,3-dihydroxy-isovalerate. In the isomerase reaction, S2AL is rearranged via a Mg-dependent methyl migration to produce 3-hydroxy-3-methyl-2-ketobutyrate (HMKB). In the reductase reaction, this 2-ketoacid undergoes a metal-dependent reduction by NADPH to yield (R)-2,3-dihydroxy-isovalerate. The polypeptide is Ketol-acid reductoisomerase (NADP(+)) (Ruthia magnifica subsp. Calyptogena magnifica).